We begin with the raw amino-acid sequence, 329 residues long: GTP 3',8-cyclase (329 aa).

The Radical SAM core domain maps to 8 to 234 (AFARKFYYLR…QLRQRSDGPA (227 aa)). Residue Arg17 participates in GTP binding. [4Fe-4S] cluster is bound by residues Cys24 and Cys28. Tyr30 provides a ligand contact to S-adenosyl-L-methionine. [4Fe-4S] cluster is bound at residue Cys31. Arg68 is a GTP binding site. Gly72 is a binding site for S-adenosyl-L-methionine. Residue Thr99 participates in GTP binding. Ser123 serves as a coordination point for S-adenosyl-L-methionine. Lys160 contributes to the GTP binding site. Residue Met194 coordinates S-adenosyl-L-methionine. Cys257 and Cys260 together coordinate [4Fe-4S] cluster. GTP is bound at residue 262–264 (RLR). A [4Fe-4S] cluster-binding site is contributed by Cys274.

Belongs to the radical SAM superfamily. MoaA family. As to quaternary structure, monomer and homodimer. It depends on [4Fe-4S] cluster as a cofactor.

It catalyses the reaction GTP + AH2 + S-adenosyl-L-methionine = (8S)-3',8-cyclo-7,8-dihydroguanosine 5'-triphosphate + 5'-deoxyadenosine + L-methionine + A + H(+). Its pathway is cofactor biosynthesis; molybdopterin biosynthesis. In terms of biological role, catalyzes the cyclization of GTP to (8S)-3',8-cyclo-7,8-dihydroguanosine 5'-triphosphate. The chain is GTP 3',8-cyclase from Escherichia coli (strain K12 / MC4100 / BW2952).